The primary structure comprises 122 residues: Large ribosomal subunit protein bL12 (122 aa).

It belongs to the bacterial ribosomal protein bL12 family. In terms of assembly, homodimer. Part of the ribosomal stalk of the 50S ribosomal subunit. Forms a multimeric L10(L12)X complex, where L10 forms an elongated spine to which 2 to 4 L12 dimers bind in a sequential fashion. Binds GTP-bound translation factors.

Functionally, forms part of the ribosomal stalk which helps the ribosome interact with GTP-bound translation factors. Is thus essential for accurate translation. In Shewanella loihica (strain ATCC BAA-1088 / PV-4), this protein is Large ribosomal subunit protein bL12.